We begin with the raw amino-acid sequence, 81 residues long: Acyl carrier protein (81 aa).

The Carrier domain maps to 2-77; it reads ASIEERVVDI…EAIDFIEKEK (76 aa). Ser37 carries the O-(pantetheine 4'-phosphoryl)serine modification.

The protein belongs to the acyl carrier protein (ACP) family. Post-translationally, 4'-phosphopantetheine is transferred from CoA to a specific serine of apo-ACP by AcpS. This modification is essential for activity because fatty acids are bound in thioester linkage to the sulfhydryl of the prosthetic group.

The protein resides in the cytoplasm. It participates in lipid metabolism; fatty acid biosynthesis. Carrier of the growing fatty acid chain in fatty acid biosynthesis. This Rhodopirellula baltica (strain DSM 10527 / NCIMB 13988 / SH1) protein is Acyl carrier protein.